The primary structure comprises 409 residues: Pyrophosphate--fructose 6-phosphate 1-phosphotransferase (409 aa).

Gly14 provides a ligand contact to diphosphate. Asp123 contributes to the Mg(2+) binding site. Substrate-binding positions include 151–153, 196–198, Glu268, and 325–328; these read TVD, MGR, and YFAR. Catalysis depends on Asp153, which acts as the Proton acceptor.

Belongs to the phosphofructokinase type A (PFKA) family. PPi-dependent PFK group II subfamily. Clade 'P' sub-subfamily. Homodimer. Mg(2+) is required as a cofactor.

The protein localises to the cytoplasm. It catalyses the reaction beta-D-fructose 6-phosphate + diphosphate = beta-D-fructose 1,6-bisphosphate + phosphate + H(+). Its pathway is carbohydrate degradation; glycolysis; D-glyceraldehyde 3-phosphate and glycerone phosphate from D-glucose: step 3/4. With respect to regulation, non-allosteric. Functionally, catalyzes the phosphorylation of D-fructose 6-phosphate, the first committing step of glycolysis. Uses inorganic phosphate (PPi) as phosphoryl donor instead of ATP like common ATP-dependent phosphofructokinases (ATP-PFKs), which renders the reaction reversible, and can thus function both in glycolysis and gluconeogenesis. Consistently, PPi-PFK can replace the enzymes of both the forward (ATP-PFK) and reverse (fructose-bisphosphatase (FBPase)) reactions. The polypeptide is Pyrophosphate--fructose 6-phosphate 1-phosphotransferase (Methylomonas methanica).